The primary structure comprises 151 residues: Probable transcriptional regulator syrB2 (151 aa).

The tract at residues 1 to 61 (MADESNTGSI…PRRYSEQQRK (61 aa)) is disordered. A compositionally biased stretch (low complexity) spans 11–23 (AAAVAPNADVKAP). The span at 24–35 (AAKKKRSPRRQK) shows a compositional bias: basic residues.

It belongs to the SyrB family.

Its function is as follows. Seems to affect the transcription of cya3. May be negatively autoregulated. The protein is Probable transcriptional regulator syrB2 (syrB2) of Rhizobium meliloti (strain 1021) (Ensifer meliloti).